We begin with the raw amino-acid sequence, 493 residues long: MASGILVNVKEEVTCPICLELLTQPLSLDCGHSFCQACLTANHKKSMLDKGESSCPVCRISYQPENIRPNRHVANIVEKLREVKLSPEGQKVDHCAHHGEKLLLFCQEDGKVICWLCERSQEHRGHHTFLTEEVAREYQVKLQAALEMLRQKQQEAEELEADIREEKASWKTQIQYDKTNVLADFEQLRDILDWEESNELQNLEKEEEDILKSLTKSETEMVQQTQSVRELISDLERRLQGSVMELLQGVDGVIKRMENVTLKKPETFPKNQRRVFRAPDLKGMLEVFRELTDVRRYWVDVTVAPNNISCAVISEDMRQVSSPKPQIIYGARGTRYQTFMNFNYCTGILGSQSITSGKHYWEVDVSKKSAWILGVCAGFQPDAMCNIEKNENYQPKYGYWVIGLEEGVKCSAFQDGSFHTPSAPFIVPLSVIICPDRVGVFLDYEACTVSFFNITNHGSLIYKFSHCSFSQPVFPYLNPRKCGVPMTLCSPSS.

At Ala2 the chain carries N-acetylalanine. Residues 15–59 form an RING-type zinc finger; it reads CPICLELLTQPLSLDCGHSFCQACLTANHKKSMLDKGESSCPVCR. The residue at position 86 (Ser86) is a Phosphoserine. The B box-type zinc finger occupies 90 to 132; that stretch reads QKVDHCAHHGEKLLLFCQEDGKVICWLCERSQEHRGHHTFLTE. Positions 95, 98, 117, and 123 each coordinate Zn(2+). Residues 131-240 are a coiled coil; the sequence is TEEVAREYQV…LISDLERRLQ (110 aa). A required for interaction with GABARAP and for autophagy region spans residues 185 to 198; it reads FEQLRDILDWEESN. One can recognise a B30.2/SPRY domain in the interval 281–493; that stretch reads LKGMLEVFRE…VPMTLCSPSS (213 aa).

Belongs to the TRIM/RBCC family. In terms of assembly, can form homodimers and homotrimers. In addition to lower-order dimerization, also exhibits a higher-order multimerization and both low- and high-order multimerizations are essential for its restriction activity. Interacts with BTBD1 and BTBD2. Interacts with PSMC4, PSMC5, PSMD7 and HSPA8/HSC70. Interacts (via B30.2/SPRY domain) with HSPA1A/B. Interacts with PSMC2, MAP3K7/TAK1, TAB2 and TAB3. Interacts with SQSTM1. Interacts with TRIM6 and TRIM34. Interacts with ULK1 (phosphorylated form), GABARAP, GABARAPL1, GABARAPL2, MAP1LC3A, MAP1LC3C and BECN1. Post-translationally, degraded in a proteasome-independent fashion in the absence of viral infection but in a proteasome-dependent fashion following exposure to restriction sensitive virus. Autoubiquitinated in a RING finger- and UBE2D2-dependent manner. Monoubiquitinated by TRIM21. Deubiquitinated by Yersinia YopJ. Ubiquitination may not lead to proteasomal degradation.

The protein localises to the cytoplasm. It localises to the nucleus. The enzyme catalyses S-ubiquitinyl-[E2 ubiquitin-conjugating enzyme]-L-cysteine + [acceptor protein]-L-lysine = [E2 ubiquitin-conjugating enzyme]-L-cysteine + N(6)-ubiquitinyl-[acceptor protein]-L-lysine.. Its pathway is protein modification; protein ubiquitination. Its function is as follows. Capsid-specific restriction factor that prevents infection from non-host-adapted retroviruses. Blocks viral replication early in the life cycle, after viral entry but before reverse transcription. In addition to acting as a capsid-specific restriction factor, also acts as a pattern recognition receptor that activates innate immune signaling in response to the retroviral capsid lattice. Binding to the viral capsid triggers its E3 ubiquitin ligase activity, and in concert with the heterodimeric ubiquitin conjugating enzyme complex UBE2V1-UBE2N (also known as UBC13-UEV1A complex) generates 'Lys-63'-linked polyubiquitin chains, which in turn are catalysts in the autophosphorylation of the MAP3K7/TAK1 complex (includes TAK1, TAB2, and TAB3). Activation of the MAP3K7/TAK1 complex by autophosphorylation results in the induction and expression of NF-kappa-B and MAPK-responsive inflammatory genes, thereby leading to an innate immune response in the infected cell. Plays a role in regulating autophagy through activation of autophagy regulator BECN1 by causing its dissociation from its inhibitors BCL2 and TAB2. This is Tripartite motif-containing protein 5 (TRIM5) from Pan troglodytes (Chimpanzee).